We begin with the raw amino-acid sequence, 206 residues long: Large ribosomal subunit protein uL22m (206 aa).

A mitochondrion-targeting transit peptide spans 1–40 (MAAAVLGQLGALWIHNLRSRGKLALGVLPQSYIHTSASLD).

This sequence belongs to the universal ribosomal protein uL22 family. Component of the mitochondrial large ribosomal subunit (mt-LSU). Mature mammalian 55S mitochondrial ribosomes consist of a small (28S) and a large (39S) subunit. The 28S small subunit contains a 12S ribosomal RNA (12S mt-rRNA) and 30 different proteins. The 39S large subunit contains a 16S rRNA (16S mt-rRNA), a copy of mitochondrial valine transfer RNA (mt-tRNA(Val)), which plays an integral structural role, and 52 different proteins.

Its subcellular location is the mitochondrion. This chain is Large ribosomal subunit protein uL22m (MRPL22), found in Homo sapiens (Human).